The primary structure comprises 272 residues: GTP cyclohydrolase FolE2 (272 aa).

Belongs to the GTP cyclohydrolase IV family.

The enzyme catalyses GTP + H2O = 7,8-dihydroneopterin 3'-triphosphate + formate + H(+). The protein operates within cofactor biosynthesis; 7,8-dihydroneopterin triphosphate biosynthesis; 7,8-dihydroneopterin triphosphate from GTP: step 1/1. Converts GTP to 7,8-dihydroneopterin triphosphate. The chain is GTP cyclohydrolase FolE2 from Aromatoleum aromaticum (strain DSM 19018 / LMG 30748 / EbN1) (Azoarcus sp. (strain EbN1)).